The primary structure comprises 227 residues: Uracil-DNA glycosylase 2 (227 aa).

Residue aspartate 67 is the Proton acceptor of the active site.

It belongs to the uracil-DNA glycosylase (UDG) superfamily. UNG family.

It localises to the cytoplasm. It carries out the reaction Hydrolyzes single-stranded DNA or mismatched double-stranded DNA and polynucleotides, releasing free uracil.. Functionally, excises uracil residues from the DNA which can arise as a result of misincorporation of dUMP residues by DNA polymerase or due to deamination of cytosine. The chain is Uracil-DNA glycosylase 2 (ung2) from Streptomyces coelicolor (strain ATCC BAA-471 / A3(2) / M145).